Here is a 250-residue protein sequence, read N- to C-terminus: Isoprenyl transferase (250 aa).

Aspartate 26 is an active-site residue. Residue aspartate 26 participates in Mg(2+) binding. Substrate contacts are provided by residues 27-30, tryptophan 31, arginine 39, histidine 43, and 71-73; these read GNGR and STE. The Proton acceptor role is filled by asparagine 74. Substrate contacts are provided by residues tryptophan 75, arginine 77, arginine 198, and 204–206; that span reads RLS. Glutamate 217 lines the Mg(2+) pocket.

This sequence belongs to the UPP synthase family. As to quaternary structure, homodimer. It depends on Mg(2+) as a cofactor.

Its function is as follows. Catalyzes the condensation of isopentenyl diphosphate (IPP) with allylic pyrophosphates generating different type of terpenoids. This Streptococcus agalactiae serotype V (strain ATCC BAA-611 / 2603 V/R) protein is Isoprenyl transferase.